A 516-amino-acid chain; its full sequence is 2-isopropylmalate synthase (516 aa).

A Pyruvate carboxyltransferase domain is found at 5-267; sequence VIIFDTTLRD…TTGIKHDEIS (263 aa). Mn(2+) contacts are provided by Asp14, His202, His204, and Asn238. The regulatory domain stretch occupies residues 392 to 516; the sequence is KLNYLSVQSG…IKQKKSVATV (125 aa).

This sequence belongs to the alpha-IPM synthase/homocitrate synthase family. LeuA type 1 subfamily. As to quaternary structure, homodimer. Requires Mn(2+) as cofactor.

It localises to the cytoplasm. It catalyses the reaction 3-methyl-2-oxobutanoate + acetyl-CoA + H2O = (2S)-2-isopropylmalate + CoA + H(+). It participates in amino-acid biosynthesis; L-leucine biosynthesis; L-leucine from 3-methyl-2-oxobutanoate: step 1/4. Its function is as follows. Catalyzes the condensation of the acetyl group of acetyl-CoA with 3-methyl-2-oxobutanoate (2-ketoisovalerate) to form 3-carboxy-3-hydroxy-4-methylpentanoate (2-isopropylmalate). The polypeptide is 2-isopropylmalate synthase (Vibrio cholerae serotype O1 (strain ATCC 39315 / El Tor Inaba N16961)).